Reading from the N-terminus, the 559-residue chain is Sesquiterpene synthase TPS3 (559 aa).

Positions 275, 312, 316, 453, and 456 each coordinate (2E,6E)-farnesyl diphosphate. Mg(2+) contacts are provided by Asp312 and Asp316. Positions 312–316 (DDTYD) match the DDXXD motif motif. Positions 456, 460, and 464 each coordinate Mg(2+).

It belongs to the terpene synthase family. Tpsa subfamily. Monomer. Requires Mg(2+) as cofactor. As to expression, highly expressed in glandular trichomes. Expressed in roots and leaves.

It localises to the cytoplasm. The catalysed reaction is (2E,6E)-farnesyl diphosphate = (+)-(R)-germacrene A + diphosphate. It functions in the pathway secondary metabolite biosynthesis; terpenoid biosynthesis. In terms of biological role, sesquiterpene synthase involved in the biosynthesis of volatile compounds. Mediates the conversion of (2E,6E)-farnesyl diphosphate (FPP) into (+)-(R)-germacrene A. The polypeptide is Sesquiterpene synthase TPS3 (Xanthium strumarium (Rough cocklebur)).